The primary structure comprises 290 residues: Glutaredoxin domain-containing cysteine-rich protein 1 (290 aa).

Positions 127–234 constitute a Glutaredoxin domain; sequence LQQPSADLEF…DLLTKIERVQ (108 aa).

Belongs to the GRXCR1 family. In the inner ear, expressed predominantly in sensory hair cells and their stereocilia bundles with higher levels in outer hair cells (OHC) at P1 and in inner hair cells (IHC) at P5. At P1, expression is prominent in each row of stereocilia within bundles including immature shorter stereocilia. Expression is also observed in apical microvilli of sensory cells at P1 and in kinocilia at P1 and P5. In the adult, expression is localized throughout the length of the stereocilia of both OHC and IHC (at protein level).

Its subcellular location is the cell projection. The protein resides in the stereocilium. It localises to the microvillus. It is found in the kinocilium. Functionally, may play a role in actin filament architecture in developing stereocilia of sensory cells. In Mus musculus (Mouse), this protein is Glutaredoxin domain-containing cysteine-rich protein 1 (Grxcr1).